The following is a 412-amino-acid chain: Multifunctional CCA protein (412 aa).

ATP contacts are provided by glycine 8 and arginine 11. 2 residues coordinate CTP: glycine 8 and arginine 11. Mg(2+)-binding residues include aspartate 21 and aspartate 23. Residues arginine 91, arginine 137, and arginine 140 each contribute to the ATP site. The CTP site is built by arginine 91, arginine 137, and arginine 140. Positions 228–329 (TGIHTLMTLS…VKLFDSIDAW (102 aa)) constitute an HD domain.

It belongs to the tRNA nucleotidyltransferase/poly(A) polymerase family. Bacterial CCA-adding enzyme type 1 subfamily. Monomer. Can also form homodimers and oligomers. It depends on Mg(2+) as a cofactor. Ni(2+) is required as a cofactor.

The catalysed reaction is a tRNA precursor + 2 CTP + ATP = a tRNA with a 3' CCA end + 3 diphosphate. The enzyme catalyses a tRNA with a 3' CCA end + 2 CTP + ATP = a tRNA with a 3' CCACCA end + 3 diphosphate. Catalyzes the addition and repair of the essential 3'-terminal CCA sequence in tRNAs without using a nucleic acid template. Adds these three nucleotides in the order of C, C, and A to the tRNA nucleotide-73, using CTP and ATP as substrates and producing inorganic pyrophosphate. tRNA 3'-terminal CCA addition is required both for tRNA processing and repair. Also involved in tRNA surveillance by mediating tandem CCA addition to generate a CCACCA at the 3' terminus of unstable tRNAs. While stable tRNAs receive only 3'-terminal CCA, unstable tRNAs are marked with CCACCA and rapidly degraded. The polypeptide is Multifunctional CCA protein (Escherichia coli O7:K1 (strain IAI39 / ExPEC)).